Consider the following 391-residue polypeptide: Recombination and repair protein (391 aa).

Residue 60–67 participates in ATP binding; it reads GPSKSFKS. The segment covering 364–374 has biased composition (basic and acidic residues); the sequence is KSPESKSKSAA. The segment at 364 to 391 is disordered; the sequence is KSPESKSKSAADLETDLEQLSDMEEFNE. Positions 376 to 391 are enriched in acidic residues; that stretch reads LETDLEQLSDMEEFNE.

Belongs to the RecA family.

In terms of biological role, important in genetic recombination, DNA repair, and replication. Possesses pairing and strand-transfer activity. Interacts with dda and gene 32 proteins. This is Recombination and repair protein (UVSX) from Enterobacteria phage T4 (Bacteriophage T4).